The chain runs to 157 residues: Crossover junction endodeoxyribonuclease RuvC (157 aa).

Residues Asp7, Glu66, and Asp139 contribute to the active site. Asp7, Glu66, and Asp139 together coordinate Mg(2+).

Belongs to the RuvC family. As to quaternary structure, homodimer which binds Holliday junction (HJ) DNA. The HJ becomes 2-fold symmetrical on binding to RuvC with unstacked arms; it has a different conformation from HJ DNA in complex with RuvA. In the full resolvosome a probable DNA-RuvA(4)-RuvB(12)-RuvC(2) complex forms which resolves the HJ. Mg(2+) is required as a cofactor.

It is found in the cytoplasm. It catalyses the reaction Endonucleolytic cleavage at a junction such as a reciprocal single-stranded crossover between two homologous DNA duplexes (Holliday junction).. The RuvA-RuvB-RuvC complex processes Holliday junction (HJ) DNA during genetic recombination and DNA repair. Endonuclease that resolves HJ intermediates. Cleaves cruciform DNA by making single-stranded nicks across the HJ at symmetrical positions within the homologous arms, yielding a 5'-phosphate and a 3'-hydroxyl group; requires a central core of homology in the junction. The consensus cleavage sequence is 5'-(A/T)TT(C/G)-3'. Cleavage occurs on the 3'-side of the TT dinucleotide at the point of strand exchange. HJ branch migration catalyzed by RuvA-RuvB allows RuvC to scan DNA until it finds its consensus sequence, where it cleaves and resolves the cruciform DNA. In Helicobacter pylori (strain ATCC 700392 / 26695) (Campylobacter pylori), this protein is Crossover junction endodeoxyribonuclease RuvC.